We begin with the raw amino-acid sequence, 438 residues long: ATP-dependent RNA helicase sub2 (438 aa).

Low complexity predominate over residues 23–36 (TTAAPAANGAPAKT). A disordered region spans residues 23–42 (TTAAPAANGAPAKTGDLTVT). The Q motif motif lies at 58–86 (TGFRDFLLKGELLRAITDCGFEHPSEVCI). The Helicase ATP-binding domain maps to 86 to 261 (IPTAILNVDV…KKFMRNPLEV (176 aa)). 99–106 (AKSGLGKT) serves as a coordination point for ATP. The short motif at 208 to 211 (DECD) is the DEAD box element. One can recognise a Helicase C-terminal domain in the interval 289–434 (KLNDLLDNLE…EYPEGGVDSS (146 aa)).

It belongs to the DEAD box helicase family. DECD subfamily.

The protein resides in the nucleus. The enzyme catalyses ATP + H2O = ADP + phosphate + H(+). In terms of biological role, ATP-binding RNA helicase involved in transcription elongation and required for the export of mRNA out of the nucleus. SUB2 also plays a role in pre-mRNA splicing and spliceosome assembly. May be involved in rDNA and telomeric silencing, and maintenance of genome integrity. The sequence is that of ATP-dependent RNA helicase sub2 (sub2) from Aspergillus terreus (strain NIH 2624 / FGSC A1156).